A 73-amino-acid chain; its full sequence is Putative defensin-like protein 42 (73 aa).

Disulfide bonds link cysteine 6-cysteine 58, cysteine 18-cysteine 41, cysteine 27-cysteine 50, and cysteine 31-cysteine 52.

It belongs to the DEFL family.

In Arabidopsis thaliana (Mouse-ear cress), this protein is Putative defensin-like protein 42.